A 320-amino-acid polypeptide reads, in one-letter code: Adenosine receptor A3 (320 aa).

The Extracellular segment spans residues 1–16 (MKANNTTTSALWLQIT). N-linked (GlcNAc...) asparagine glycosylation is found at Asn-4 and Asn-5. Residues 17–39 (YITMEAAIGLCAVVGNMLVIWVV) form a helical membrane-spanning segment. Residues 40-50 (KLNRTLRTTTF) lie on the Cytoplasmic side of the membrane. Residues 51 to 74 (YFIVSLALADIAVGVLVIPLAIAV) traverse the membrane as a helical segment. The Extracellular segment spans residues 75 to 86 (SLEVQMHFYACL). Cys-85 and Cys-168 are disulfide-bonded. Residues 87–108 (FMSCVLLVFTHASIMSLLAIAV) traverse the membrane as a helical segment. At 109–128 (DRYLRVKLTVRYRTVTTQRR) the chain is on the cytoplasmic side. Residues 129–150 (IWLFLGLCWLVSFLVGLTPMFG) form a helical membrane-spanning segment. Residues 151–179 (WNRKVTLELSQNSSTLSCHFRSVVGLDYM) lie on the Extracellular side of the membrane. Residues 180–200 (VFFSFITWILIPLVVMCIIYL) traverse the membrane as a helical segment. The Cytoplasmic portion of the chain corresponds to 201 to 233 (DIFYIIRNKLSQNLTGFRETRAFYGREFKTAKS). The chain crosses the membrane as a helical span at residues 234-257 (LFLVLFLFALCWLPLSIINFVSYF). The Extracellular portion of the chain corresponds to 258–263 (NVKIPE). Residues 264 to 286 (IAMCLGILLSHANSMMNPIVYAC) traverse the membrane as a helical segment. Residues 287–320 (KIKKFKETYFVILRACRLCQTSDSLDSNLEQTTE) are Cytoplasmic-facing. Cys-305 carries the S-palmitoyl cysteine lipid modification. Phosphothreonine occurs at positions 307, 318, and 319.

Belongs to the G-protein coupled receptor 1 family. Phosphorylation on Thr-318 and Thr-319 may be crucial for rapid desensitization. Phosphorylation on Thr-318 may be necessary for phosphorylation on Thr-319 to occur. As to expression, testis, particularly in spermatocytes and spermatids but not in spermatogonia. Low levels in the brain.

The protein resides in the cell membrane. Functionally, receptor for adenosine. The activity of this receptor is mediated by G proteins which inhibits adenylyl cyclase. May play a role during reproduction. This Rattus norvegicus (Rat) protein is Adenosine receptor A3 (Adora3).